Consider the following 135-residue polypeptide: Putative pre-16S rRNA nuclease (135 aa).

Belongs to the YqgF nuclease family.

It localises to the cytoplasm. Its function is as follows. Could be a nuclease involved in processing of the 5'-end of pre-16S rRNA. This Maridesulfovibrio salexigens (strain ATCC 14822 / DSM 2638 / NCIMB 8403 / VKM B-1763) (Desulfovibrio salexigens) protein is Putative pre-16S rRNA nuclease.